We begin with the raw amino-acid sequence, 500 residues long: Protein nucleotidyltransferase YdiU (500 aa).

ATP-binding residues include Gly96, Gly98, Arg99, Lys119, Asp131, Gly132, Arg182, and Arg189. Asp258 functions as the Proton acceptor in the catalytic mechanism. Mg(2+) is bound by residues Asn259 and Asp268. Asp268 contacts ATP.

The protein belongs to the SELO family. Mg(2+) serves as cofactor. It depends on Mn(2+) as a cofactor.

The enzyme catalyses L-seryl-[protein] + ATP = 3-O-(5'-adenylyl)-L-seryl-[protein] + diphosphate. The catalysed reaction is L-threonyl-[protein] + ATP = 3-O-(5'-adenylyl)-L-threonyl-[protein] + diphosphate. It catalyses the reaction L-tyrosyl-[protein] + ATP = O-(5'-adenylyl)-L-tyrosyl-[protein] + diphosphate. It carries out the reaction L-histidyl-[protein] + UTP = N(tele)-(5'-uridylyl)-L-histidyl-[protein] + diphosphate. The enzyme catalyses L-seryl-[protein] + UTP = O-(5'-uridylyl)-L-seryl-[protein] + diphosphate. The catalysed reaction is L-tyrosyl-[protein] + UTP = O-(5'-uridylyl)-L-tyrosyl-[protein] + diphosphate. Functionally, nucleotidyltransferase involved in the post-translational modification of proteins. It can catalyze the addition of adenosine monophosphate (AMP) or uridine monophosphate (UMP) to a protein, resulting in modifications known as AMPylation and UMPylation. The sequence is that of Protein nucleotidyltransferase YdiU from Rhizobium etli (strain CIAT 652).